The chain runs to 450 residues: Gastrin/cholecystokinin type B receptor (450 aa).

The Extracellular portion of the chain corresponds to Met1–Arg57. 3 N-linked (GlcNAc...) asparagine glycosylation sites follow: Asn7, Asn30, and Asn36. The helical transmembrane segment at Ile58–Leu79 threads the bilayer. Residues Gly80 to Thr87 are Cytoplasmic-facing. A helical transmembrane segment spans residues Val88–Pro109. Residues Phe110–Ser131 lie on the Extracellular side of the membrane. Cys127 and Cys205 are joined by a disulfide. The chain crosses the membrane as a helical span at residues Tyr132–Leu150. Residues Glu151–His170 are Cytoplasmic-facing. Residues Ala171–Tyr189 form a helical membrane-spanning segment. Residues Pro190–Ser219 lie on the Extracellular side of the membrane. A helical membrane pass occupies residues Val220–Ser242. The Cytoplasmic portion of the chain corresponds to Arg243 to Arg336. A disordered region spans residues Asp258–Pro277. Residues Met337–Trp358 traverse the membrane as a helical segment. At Cys359–Ser376 the chain is on the extracellular side. A helical membrane pass occupies residues Phe377 to His397. At Arg398 to Gly450 the chain is on the cytoplasmic side. Cys411 carries the S-palmitoyl cysteine lipid modification.

The protein belongs to the G-protein coupled receptor 1 family. As to expression, stomach and brain.

It localises to the cell membrane. In terms of biological role, receptor for gastrin and cholecystokinin. The CCK-B receptors occur throughout the central nervous system where they modulate anxiety, analgesia, arousal, and neuroleptic activity. This receptor mediates its action by association with G proteins that activate a phosphatidylinositol-calcium second messenger system. This Mastomys natalensis (African soft-furred rat) protein is Gastrin/cholecystokinin type B receptor (CCKBR).